The sequence spans 553 residues: Putative transport protein YidE (553 aa).

The next 5 membrane-spanning stretches (helical) occupy residues 4–24 (IALT…IGNV), 28–48 (GIGL…HFVS), 65–85 (FGLI…FFAS), 95–115 (LFAV…HKLF), and 158–178 (MSYA…MWML). 2 consecutive RCK C-terminal domains span residues 191 to 276 (QQHE…VIGQ) and 279 to 361 (DTSL…VLGN). 6 helical membrane passes run 371 to 391 (MLPV…PVFV), 393 to 413 (GFPA…ALIL), 439 to 459 (IVLF…NTLV), 464 to 484 (LSWI…VGIL), 493 to 513 (YLTM…LAFA), and 533 to 553 (LVMF…WSIG).

It belongs to the AAE transporter (TC 2.A.81) family. YidE subfamily.

It is found in the cell membrane. This Escherichia coli (strain ATCC 8739 / DSM 1576 / NBRC 3972 / NCIMB 8545 / WDCM 00012 / Crooks) protein is Putative transport protein YidE.